The following is a 454-amino-acid chain: Keratin, type I cuticular Ha5 (454 aa).

Residues 1-97 are head; it reads MASKCLKASF…FGEGILTGNE (97 aa). One can recognise an IF rod domain in the interval 97 to 407; that stretch reads EKETMQFLND…GLLDSEDCKL (311 aa). The tract at residues 98–125 is coil 1A; sequence KETMQFLNDRLASYLEKCGSWSGRTRSW. Residues 134 to 142 form a linker 1 region; that stretch reads SNSALPVPD. A coil 1B region spans residues 143 to 243; that stretch reads YQSYFQTIEE…HEEEVNSLRC (101 aa). Positions 244 to 259 are linker 12; the sequence is QLGDRLNVEVDAAPPV. The interval 260–403 is coil 2; it reads DLNRVLNEMR…NTYRGLLDSE (144 aa). A tail region spans residues 404-454; it reads DCKLPCNPCAPDHSPSKSCLPCLPAASCGPGMARTTCSPRPICVPCPGSRF.

The protein belongs to the intermediate filament family.

The polypeptide is Keratin, type I cuticular Ha5 (Bos taurus (Bovine)).